Reading from the N-terminus, the 439-residue chain is Glucose-6-phosphate 1-dehydrogenase (439 aa).

An NADP(+)-binding site is contributed by K100. Substrate-binding residues include H130, K134, E168, and D187. H192 (proton acceptor) is an active-site residue. Position 288 (K288) interacts with substrate.

It belongs to the glucose-6-phosphate dehydrogenase family.

The enzyme catalyses D-glucose 6-phosphate + NADP(+) = 6-phospho-D-glucono-1,5-lactone + NADPH + H(+). Its pathway is carbohydrate degradation; pentose phosphate pathway; D-ribulose 5-phosphate from D-glucose 6-phosphate (oxidative stage): step 1/3. Catalyzes the oxidation of glucose 6-phosphate to 6-phosphogluconolactone. The protein is Glucose-6-phosphate 1-dehydrogenase of Chlamydia trachomatis serovar D (strain ATCC VR-885 / DSM 19411 / UW-3/Cx).